The sequence spans 325 residues: Phenylalanine--tRNA ligase alpha subunit (325 aa).

Mg(2+) is bound at residue glutamate 251.

Belongs to the class-II aminoacyl-tRNA synthetase family. Phe-tRNA synthetase alpha subunit type 1 subfamily. Tetramer of two alpha and two beta subunits. It depends on Mg(2+) as a cofactor.

It is found in the cytoplasm. The catalysed reaction is tRNA(Phe) + L-phenylalanine + ATP = L-phenylalanyl-tRNA(Phe) + AMP + diphosphate + H(+). This Thermotoga maritima (strain ATCC 43589 / DSM 3109 / JCM 10099 / NBRC 100826 / MSB8) protein is Phenylalanine--tRNA ligase alpha subunit (pheS).